The primary structure comprises 429 residues: Zinc metalloproteinase nas-17 (429 aa).

An N-terminal signal peptide occupies residues 1–21 (MFLRPSTLLLTLFLALVAGSA). N-linked (GlcNAc...) asparagine glycosylation is present at N54. A Peptidase M12A domain is found at 62-251 (RQITKIWKKW…VNINVRYSCG (190 aa)). Cystine bridges form between C104–C250, C125–C144, C252–C272, and C274–C283. Residue H152 participates in Zn(2+) binding. E153 is an active-site residue. Positions 156 and 162 each coordinate Zn(2+). The EGF-like domain occupies 245-284 (NVRYSCGCAKSLTCENGGYTNPSNCATCVCPTGFAGTLCN).

Zn(2+) serves as cofactor.

Its subcellular location is the secreted. In terms of biological role, metalloprotease. The chain is Zinc metalloproteinase nas-17 (nas-17) from Caenorhabditis elegans.